A 200-amino-acid chain; its full sequence is Oligoribonuclease (200 aa).

An Exonuclease domain is found at 5–169 (MVWIDCEMTG…ADIRESIAEL (165 aa)). The active site involves Tyr-126.

The protein belongs to the oligoribonuclease family.

The protein resides in the cytoplasm. 3'-to-5' exoribonuclease specific for small oligoribonucleotides. This chain is Oligoribonuclease, found in Streptomyces coelicolor (strain ATCC BAA-471 / A3(2) / M145).